The primary structure comprises 933 residues: Bromodomain testis-specific protein (933 aa).

The interval 1–21 (MSMSSRHLHSSIVNPPPPEYI) is disordered. Positions 28–134 (RLTNQLQYLE…KVFMEKIAEM (107 aa)) constitute a Bromo 1 domain. Positions 214–225 (KGIKRKADTTTP) match the Nuclear localization signal motif. A disordered region spans residues 235–263 (ESSPTLSEPKPNKILSGTEKTRSAETSAV). Positions 278-385 (NQICEQLKHC…DVFEGMFAKI (108 aa)) constitute a Bromo 2 domain. 3 disordered regions span residues 398 to 425 (RYKT…DERA), 576 to 610 (KPSS…QLSS), and 627 to 662 (GGPS…ESAT). Residues 404–418 (EESSSSSSSEQSSSS) are compositionally biased toward low complexity. The stretch at 423–448 (ERAQHLALLQEQLRAVQEQLKALTET) forms a coiled coil. Positions 495-577 (VSDEEEDVKP…VCLRKRPKKP (83 aa)) constitute an NET domain. Residues 584–603 (KSKEQLNKEKKQELEKRLRD) are compositionally biased toward basic and acidic residues. Low complexity predominate over residues 630 to 660 (SRLSESSTSSSASDVSNSSDSSSSDSSDSES). Positions 829-917 (AKEERERALK…RREAMAGTID (89 aa)) form a coiled coil.

The protein belongs to the BET family.

It is found in the nucleus. Functionally, testis-specific chromatin protein that specifically binds histone H4 acetylated at 'Lys-5' and 'Lys-8' (H4K5ac and H4K8ac, respectively) and plays a key role in spermatogenesis. Required in late pachytene spermatocytes: plays a role in meiotic and post-meiotic cells by binding to acetylated histones at the promoter of specific meiotic and post-meiotic genes, facilitating their activation at the appropriate time. In the post-meiotic phase of spermatogenesis, binds to hyperacetylated histones and participates in their general removal from DNA. Also recognizes and binds a subset of butyrylated histones: able to bind histone H4 butyrylated at 'Lys-8' (H4K8ac), while it is not able to bind H4 butyrylated at 'Lys-5' (H4K5ac). The protein is Bromodomain testis-specific protein (brdt) of Xenopus tropicalis (Western clawed frog).